We begin with the raw amino-acid sequence, 158 residues long: Transcription elongation factor GreA (158 aa).

Residues 49-69 are a coiled coil; that stretch reads SEYESAKDEQAFVEGRISQIE. The segment at 102 to 125 is disordered; it reads EEPESYTIVGESESDPLSGKISNE.

Belongs to the GreA/GreB family.

In terms of biological role, necessary for efficient RNA polymerase transcription elongation past template-encoded arresting sites. The arresting sites in DNA have the property of trapping a certain fraction of elongating RNA polymerases that pass through, resulting in locked ternary complexes. Cleavage of the nascent transcript by cleavage factors such as GreA or GreB allows the resumption of elongation from the new 3'terminus. GreA releases sequences of 2 to 3 nucleotides. The polypeptide is Transcription elongation factor GreA (Limosilactobacillus fermentum (strain NBRC 3956 / LMG 18251) (Lactobacillus fermentum)).